We begin with the raw amino-acid sequence, 185 residues long: MLNEIKAKTKERMLKTIQSFHDDIKGVRTGRASASLLDGIVVNIYGGHQKLNQVAGVSVIDNKTLSIKIWDINVVGEVKNAILNANLNLNPVVEGNTIRIALPDLTQETREKLVKLLHQFAENARIAIRNIRRDIMEETEKMKENKEISEDDFHGAKKEIQNITDNNIKKIDGELSIKEKDILNH.

It belongs to the RRF family.

It localises to the cytoplasm. Functionally, responsible for the release of ribosomes from messenger RNA at the termination of protein biosynthesis. May increase the efficiency of translation by recycling ribosomes from one round of translation to another. The chain is Ribosome-recycling factor from Wolbachia sp. subsp. Drosophila simulans (strain wRi).